Consider the following 123-residue polypeptide: Ribosome-binding factor A (123 aa).

Belongs to the RbfA family. Monomer. Binds 30S ribosomal subunits, but not 50S ribosomal subunits or 70S ribosomes.

The protein resides in the cytoplasm. In terms of biological role, one of several proteins that assist in the late maturation steps of the functional core of the 30S ribosomal subunit. Associates with free 30S ribosomal subunits (but not with 30S subunits that are part of 70S ribosomes or polysomes). Required for efficient processing of 16S rRNA. May interact with the 5'-terminal helix region of 16S rRNA. This Magnetococcus marinus (strain ATCC BAA-1437 / JCM 17883 / MC-1) protein is Ribosome-binding factor A.